We begin with the raw amino-acid sequence, 369 residues long: Proton-coupled zinc antiporter SLC30A8 (369 aa).

Residues 1–79 lie on the Cytoplasmic side of the membrane; it reads MEFLERTYLV…AKWKLCSASA (79 aa). Residues 31-52 form a disordered region; the sequence is PVNKDQCPRERPEELESGGMYH. A compositionally biased stretch (basic and acidic residues) spans 32-44; the sequence is VNKDQCPRERPEE. Histidine 52, cysteine 53, and histidine 54 together coordinate Zn(2+). Residues 52-54 carry the HCH Motif; seals regulatory zinc-binding pocket motif; sequence HCH. A helical transmembrane segment spans residues 80–100; sequence ICFIFMIAEVVGGHIAGSLAV. The Lumenal, vesicle portion of the chain corresponds to 101–103; that stretch reads VTD. Residues 104 to 124 traverse the membrane as a helical segment; sequence AAHLLIDLTSFLLSLFSLWLS. Zn(2+) contacts are provided by histidine 106, aspartate 110, and histidine 137. The Cytoplasmic portion of the chain corresponds to 125–140; the sequence is SKPPSKRLTFGWHRAE. The helical transmembrane segment at 141–161 threads the bilayer; sequence ILGALLSILCIWVVTGVLVYL. Residues 162–175 are Lumenal, vesicle-facing; sequence ACERLLYPDYQIQA. A helical transmembrane segment spans residues 176-196; the sequence is TVMIIVSSCAVAANIVLTVVL. Residues 197–217 lie on the Cytoplasmic side of the membrane; the sequence is HQRCLGHNHKEVQANASVRAA. The helical transmembrane segment at 218–238 threads the bilayer; that stretch reads FVHALGDLFQSISVLISALII. 2 residues coordinate Zn(2+): histidine 220 and aspartate 224. Residues 239–245 lie on the Lumenal, vesicle side of the membrane; it reads YFKPEYK. A helical transmembrane segment spans residues 246–266; that stretch reads IADPICTFIFSILVLASTITI. Over 267–369 the chain is Cytoplasmic; the sequence is LKDFSILLME…DCLFCEDPCD (103 aa). Zn(2+) is bound by residues histidine 301, histidine 318, histidine 345, glutamate 352, cysteine 361, and cysteine 364.

Belongs to the cation diffusion facilitator (CDF) transporter (TC 2.A.4) family. SLC30A subfamily. As to quaternary structure, homodimer. As to expression, in the endocrine pancreas, expressed in insulin-producing beta cells. Expressed at relatively high levels in subcutaneous fat tissue from lean persons; much lower levels in visceral fat, whether from lean or obese individuals, and in subcutaneous fat tissue from obese individuals. Expressed in peripheral blood mononuclear cells, including T-cells and B-cells, with great variation among individuals ranging from negative to strongly positive.

Its subcellular location is the cytoplasmic vesicle. It localises to the secretory vesicle membrane. It is found in the cell membrane. It carries out the reaction Zn(2+)(in) + 2 H(+)(out) = Zn(2+)(out) + 2 H(+)(in). Functionally, proton-coupled zinc ion antiporter mediating the entry of zinc into the lumen of pancreatic beta cell secretory granules, thereby regulating insulin secretion. In Homo sapiens (Human), this protein is Proton-coupled zinc antiporter SLC30A8.